Here is a 324-residue protein sequence, read N- to C-terminus: Beta-ketoacyl-[acyl-carrier-protein] synthase III (324 aa).

Catalysis depends on residues C112 and H249. Residues 250–254 form an ACP-binding region; it reads QANRR. The active site involves N279.

The protein belongs to the thiolase-like superfamily. FabH family. Homodimer.

The protein localises to the cytoplasm. It catalyses the reaction malonyl-[ACP] + acetyl-CoA + H(+) = 3-oxobutanoyl-[ACP] + CO2 + CoA. It functions in the pathway lipid metabolism; fatty acid biosynthesis. In terms of biological role, catalyzes the condensation reaction of fatty acid synthesis by the addition to an acyl acceptor of two carbons from malonyl-ACP. Catalyzes the first condensation reaction which initiates fatty acid synthesis and may therefore play a role in governing the total rate of fatty acid production. Possesses both acetoacetyl-ACP synthase and acetyl transacylase activities. Its substrate specificity determines the biosynthesis of branched-chain and/or straight-chain of fatty acids. The sequence is that of Beta-ketoacyl-[acyl-carrier-protein] synthase III from Streptococcus equi subsp. zooepidemicus (strain MGCS10565).